Here is an 801-residue protein sequence, read N- to C-terminus: Ferredoxin:CoB-CoM heterodisulfide reductase subunit A (801 aa).

149–172 (GGGIAGITAALNLADNGVSTVLVE) lines the FAD pocket. 4Fe-4S ferredoxin-type domains lie at 239-269 (KKPR…FNCG) and 285-320 (PKIY…FSQK). The [4Fe-4S] cluster site is built by Cys248, Cys251, Cys254, Cys258, Cys295, Cys303, Cys306, and Cys310. Residues 382 to 409 (FSKASSDPTPATCDSRCEDSSDESQGTD) form a disordered region. 4Fe-4S ferredoxin-type domains follow at residues 606 to 634 (EIAT…VNES) and 635 to 664 (GRVV…IAGF). [4Fe-4S] cluster is bound by residues Cys615, Cys618, Cys621, Cys624, Cys644, Cys647, Cys650, and Cys654.

It belongs to the HdrA family. In terms of assembly, the ferredoxin:CoB-CoM heterodisulfide reductase is composed of three subunits; HdrA1, HdrB1 and HdrC1. [4Fe-4S] cluster is required as a cofactor. FAD serves as cofactor.

It localises to the cytoplasm. The catalysed reaction is coenzyme B + coenzyme M + 2 oxidized [2Fe-2S]-[ferredoxin] = coenzyme M-coenzyme B heterodisulfide + 2 reduced [2Fe-2S]-[ferredoxin] + 2 H(+). It participates in cofactor metabolism; coenzyme M-coenzyme B heterodisulfide reduction; coenzyme B and coenzyme M from coenzyme M-coenzyme B heterodisulfide: step 1/1. Part of a complex that catalyzes the reversible reduction of CoM-S-S-CoB to the thiol-coenzymes H-S-CoM (coenzyme M) and H-S-CoB (coenzyme B). Probably involved in methylotrophic methanogenesis but not in aceticlastic methanogenesis. The polypeptide is Ferredoxin:CoB-CoM heterodisulfide reductase subunit A (Methanosarcina acetivorans (strain ATCC 35395 / DSM 2834 / JCM 12185 / C2A)).